Here is a 387-residue protein sequence, read N- to C-terminus: Queuine tRNA-ribosyltransferase (387 aa).

Asp93 functions as the Proton acceptor in the catalytic mechanism. Substrate contacts are provided by residues 93 to 97 (DSGGF), Asp147, Gln190, and Gly217. The tract at residues 248–254 (GVGTPDD) is RNA binding. Residue Asp267 is the Nucleophile of the active site. The RNA binding; important for wobble base 34 recognition stretch occupies residues 272–276 (TRAGR). Zn(2+) is bound by residues Cys305, Cys307, Cys310, and His336.

It belongs to the queuine tRNA-ribosyltransferase family. Homodimer. Within each dimer, one monomer is responsible for RNA recognition and catalysis, while the other monomer binds to the replacement base PreQ1. It depends on Zn(2+) as a cofactor.

It carries out the reaction 7-aminomethyl-7-carbaguanine + guanosine(34) in tRNA = 7-aminomethyl-7-carbaguanosine(34) in tRNA + guanine. Its pathway is tRNA modification; tRNA-queuosine biosynthesis. Its function is as follows. Catalyzes the base-exchange of a guanine (G) residue with the queuine precursor 7-aminomethyl-7-deazaguanine (PreQ1) at position 34 (anticodon wobble position) in tRNAs with GU(N) anticodons (tRNA-Asp, -Asn, -His and -Tyr). Catalysis occurs through a double-displacement mechanism. The nucleophile active site attacks the C1' of nucleotide 34 to detach the guanine base from the RNA, forming a covalent enzyme-RNA intermediate. The proton acceptor active site deprotonates the incoming PreQ1, allowing a nucleophilic attack on the C1' of the ribose to form the product. After dissociation, two additional enzymatic reactions on the tRNA convert PreQ1 to queuine (Q), resulting in the hypermodified nucleoside queuosine (7-(((4,5-cis-dihydroxy-2-cyclopenten-1-yl)amino)methyl)-7-deazaguanosine). The protein is Queuine tRNA-ribosyltransferase of Gluconacetobacter diazotrophicus (strain ATCC 49037 / DSM 5601 / CCUG 37298 / CIP 103539 / LMG 7603 / PAl5).